The primary structure comprises 338 residues: Glycerol-3-phosphate dehydrogenase [NAD(P)+] (338 aa).

Residues Ser-13, Trp-14, and Lys-108 each contribute to the NADPH site. 3 residues coordinate sn-glycerol 3-phosphate: Lys-108, Gly-139, and Ser-141. Ala-143 contacts NADPH. Sn-glycerol 3-phosphate-binding residues include Lys-194, Asp-247, Ser-257, Arg-258, and Asn-259. The active-site Proton acceptor is the Lys-194. Position 258 (Arg-258) interacts with NADPH. NADPH-binding residues include Val-282 and Glu-284.

Belongs to the NAD-dependent glycerol-3-phosphate dehydrogenase family.

Its subcellular location is the cytoplasm. The catalysed reaction is sn-glycerol 3-phosphate + NAD(+) = dihydroxyacetone phosphate + NADH + H(+). It carries out the reaction sn-glycerol 3-phosphate + NADP(+) = dihydroxyacetone phosphate + NADPH + H(+). It functions in the pathway membrane lipid metabolism; glycerophospholipid metabolism. Catalyzes the reduction of the glycolytic intermediate dihydroxyacetone phosphate (DHAP) to sn-glycerol 3-phosphate (G3P), the key precursor for phospholipid synthesis. The chain is Glycerol-3-phosphate dehydrogenase [NAD(P)+] from Listeria innocua serovar 6a (strain ATCC BAA-680 / CLIP 11262).